Consider the following 155-residue polypeptide: Mitochondrial import protein 1 (155 aa).

Belongs to the MIM1 family.

It localises to the mitochondrion outer membrane. Required for the assembly of the TOM (translocase of outer membrane) receptor complex, which is responsible for the recognition and translocation of cytosolically synthesized mitochondrial preproteins. The protein is Mitochondrial import protein 1 of Eremothecium gossypii (strain ATCC 10895 / CBS 109.51 / FGSC 9923 / NRRL Y-1056) (Yeast).